A 571-amino-acid chain; its full sequence is Urease subunit alpha (571 aa).

Residues 131-571 (GGIDAHIHFI…LPMAQRYFLF (441 aa)) form the Urease domain. 3 residues coordinate Ni(2+): His136, His138, and Lys219. At Lys219 the chain carries N6-carboxylysine. His221 is a substrate binding site. Residues His248 and His274 each contribute to the Ni(2+) site. His322 (proton donor) is an active-site residue. Asp362 contacts Ni(2+).

It belongs to the metallo-dependent hydrolases superfamily. Urease alpha subunit family. Heterotrimer of UreA (gamma), UreB (beta) and UreC (alpha) subunits. Three heterotrimers associate to form the active enzyme. It depends on Ni cation as a cofactor. In terms of processing, carboxylation allows a single lysine to coordinate two nickel ions.

Its subcellular location is the cytoplasm. The catalysed reaction is urea + 2 H2O + H(+) = hydrogencarbonate + 2 NH4(+). Its pathway is nitrogen metabolism; urea degradation; CO(2) and NH(3) from urea (urease route): step 1/1. This chain is Urease subunit alpha, found in Nostoc punctiforme (strain ATCC 29133 / PCC 73102).